The chain runs to 333 residues: Fructose-1,6-bisphosphatase class 1 (333 aa).

Mg(2+)-binding residues include Glu-92, Asp-113, Leu-115, and Asp-116. Substrate contacts are provided by residues 116-119, Asn-209, Tyr-242, and Lys-272; that span reads DGSS. Glu-278 is a binding site for Mg(2+).

This sequence belongs to the FBPase class 1 family. Homotetramer. Mg(2+) is required as a cofactor.

It is found in the cytoplasm. It catalyses the reaction beta-D-fructose 1,6-bisphosphate + H2O = beta-D-fructose 6-phosphate + phosphate. It participates in carbohydrate biosynthesis; Calvin cycle. In Chlorobium phaeobacteroides (strain BS1), this protein is Fructose-1,6-bisphosphatase class 1.